A 129-amino-acid chain; its full sequence is Lysozyme C (129 aa).

One can recognise a C-type lysozyme domain in the interval 1–129 (KVYGRCELAA…VNAWTRGCRL (129 aa)). 4 cysteine pairs are disulfide-bonded: Cys-6–Cys-127, Cys-30–Cys-115, Cys-64–Cys-80, and Cys-76–Cys-94. Active-site residues include Glu-35 and Asp-52.

The protein belongs to the glycosyl hydrolase 22 family. Monomer.

Its subcellular location is the secreted. It carries out the reaction Hydrolysis of (1-&gt;4)-beta-linkages between N-acetylmuramic acid and N-acetyl-D-glucosamine residues in a peptidoglycan and between N-acetyl-D-glucosamine residues in chitodextrins.. Lysozymes have primarily a bacteriolytic function; those in tissues and body fluids are associated with the monocyte-macrophage system and enhance the activity of immunoagents. In Chrysolophus amherstiae (Lady Amherst's pheasant), this protein is Lysozyme C (LYZ).